We begin with the raw amino-acid sequence, 2923 residues long: Cadherin EGF LAG seven-pass G-type receptor 2 (2923 aa).

Residues 1–31 (MRSPATGVPLPTPPPPLLLLLLLLLPPPLLG) form the signal peptide. The Extracellular segment spans residues 32-2380 (DQVGPCRSLG…GEILPLKTLT (2349 aa)). The interval 154–198 (PGLRAGERSPEESLGGRRKRNVNTAPQFQPPSYQATVPENQPAGT) is disordered. Positions 158–168 (AGERSPEESLG) are enriched in basic and acidic residues. The span at 175 to 196 (VNTAPQFQPPSYQATVPENQPA) shows a compositional bias: polar residues. Cadherin domains lie at 182-289 (QPPS…DPVF), 290-399 (EQQE…APQF), 400-505 (SEKR…APIF), 506-610 (VSTP…NPTF), 611-712 (TQPE…RPVF), 713-815 (QSSH…APQF), 816-921 (LRDS…PPVF), 922-1023 (EQDE…PPVL), and 1028-1146 (ILFN…SPLL). Asn-486, Asn-557, and Asn-701 each carry an N-linked (GlcNAc...) asparagine glycan. N-linked (GlcNAc...) asparagine glycosylation is found at Asn-1036, Asn-1076, Asn-1182, and Asn-1212. Positions 1228-1286 (DDNICLREPCENYMRCVSVLRFDSSAPFIASSSVLFRPIHPVGGLRCRCPPGFTGDYCE) constitute an EGF-like 1; calcium-binding domain. Cystine bridges form between Cys-1232–Cys-1243, Cys-1237–Cys-1274, Cys-1276–Cys-1285, Cys-1292–Cys-1303, Cys-1297–Cys-1312, Cys-1314–Cys-1323, Cys-1332–Cys-1343, Cys-1337–Cys-1353, and Cys-1355–Cys-1365. The 37-residue stretch at 1288–1324 (EVDLCYSRPCGPHGRCRSREGGYTCLCRDGYTGEHCE) folds into the EGF-like 2; calcium-binding domain. Residues 1328 to 1366 (RSGRCTPGVCKNGGTCVNLLVGGFKCDCPSGDFEKPYCQ) form the EGF-like 3; calcium-binding domain. Positions 1367 to 1571 (VTTRSFPAHS…IANNGTVPGC (205 aa)) constitute a Laminin G-like 1 domain. 2 N-linked (GlcNAc...) asparagine glycosylation sites follow: Asn-1501 and Asn-1565. 4 disulfides stabilise this stretch: Cys-1545–Cys-1571, Cys-1578–Cys-1589, Cys-1583–Cys-1598, and Cys-1600–Cys-1609. Residues 1574-1610 (KKNVCDSNTCHNGGTCVNQWDAFSCECPLGFGGKSCA) form the EGF-like 4; calcium-binding domain. Asn-1591 carries the post-translational modification (3R)-3-hydroxyasparagine. The 178-residue stretch at 1614–1791 (ANPQHFLGSS…GESINVEQGC (178 aa)) folds into the Laminin G-like 2 domain. Asn-1741 carries an N-linked (GlcNAc...) asparagine glycan. 14 cysteine pairs are disulfide-bonded: Cys-1761/Cys-1791, Cys-1797/Cys-1808, Cys-1802/Cys-1817, Cys-1819/Cys-1828, Cys-1832/Cys-1843, Cys-1837/Cys-1855, Cys-1857/Cys-1866, Cys-1887/Cys-1899, Cys-1889/Cys-1906, Cys-1908/Cys-1921, Cys-1924/Cys-1936, Cys-1926/Cys-1943, Cys-1945/Cys-1954, and Cys-1957/Cys-1969. The EGF-like 5; calcium-binding domain occupies 1793–1828 (LPDPCDSNPCPANSYCSNDWDSYSCSCDPGYYGDNC). Asn-1810 is modified ((3R)-3-hydroxyasparagine). N-linked (GlcNAc...) asparagine glycosylation is present at Asn-1827. Residues 1829 to 1867 (TNVCDLNPCEHQSVCTRKPSAPHGYTCECPPNYLGPYCE) enclose the EGF-like 6; calcium-binding domain. The EGF-like 7; calcium-binding domain maps to 1883-1922 (TCGPCNCDVSKGFDPDCNKTSGECHCKENHYRPPGSPTCL). A glycan (N-linked (GlcNAc...) asparagine) is linked at Asn-1900. Positions 1924–1971 (CDCYPTGSLSRVCDPEDGQCPCKPGVIGRQCDRCDNPFAEVTTNGCEV) constitute a Laminin EGF-like domain. Asn-2024, Asn-2043, and Asn-2061 each carry an N-linked (GlcNAc...) asparagine glycan. One can recognise a GAIN-B domain in the interval 2199 to 2369 (ETTVILPESV…AVLMDVSRRE (171 aa)). Residues 2213–2238 (PPVVRPAGPGEAQEPEELARRQRRHP) form a disordered region. 2 cysteine pairs are disulfide-bonded: Cys-2319–Cys-2351 and Cys-2339–Cys-2353. Residues 2319-2369 (CVFWNHSILVSGTGGWSARGCEVVFRNESHVSCQCNHMTSFAVLMDVSRRE) form a GPS region. 2 N-linked (GlcNAc...) asparagine glycosylation sites follow: Asn-2323 and Asn-2345. A helical transmembrane segment spans residues 2381-2401 (YVALGVTLAALLLTFFFLTLL). The Cytoplasmic segment spans residues 2402-2416 (RILRSNQHGIRRNLT). The chain crosses the membrane as a helical span at residues 2417-2437 (AALGLAQLVFLLGINQADLPF). Ala-2438 is a topological domain (extracellular). A helical transmembrane segment spans residues 2439 to 2459 (CTVIAILLHFLYLCTFSWALL). Topologically, residues 2460-2480 (EALHLYRALTEVRDVNTGPMR) are cytoplasmic. A helical membrane pass occupies residues 2481–2501 (FYYMLGWGVPAFITGLAVGLD). Topologically, residues 2502 to 2519 (PEGYGNPDFCWLSIYDTL) are extracellular. A helical transmembrane segment spans residues 2520-2540 (IWSFAGPVAFAVSMSVFLYIL). Over 2541–2560 (AARASCAAQRQGFEKKGPVS) the chain is Cytoplasmic. A helical transmembrane segment spans residues 2561–2581 (GLQPSFAVLLLLSATWLLALL). Topologically, residues 2582–2591 (SVNSDTLLFH) are extracellular. Residues 2592-2612 (YLFATCNCIQGPFIFLSYVVL) traverse the membrane as a helical segment. Over 2613-2923 (SKEVRKALKL…SEFLFFNFLH (311 aa)) the chain is Cytoplasmic. Disordered regions lie at residues 2688–2838 (SALN…HKGI) and 2854–2888 (LRLP…RQSL). 2 stretches are compositionally biased toward acidic residues: residues 2718–2730 (TDSD…EDDQ) and 2742–2753 (SEEEEEEEEEEA). Residues 2807–2819 (PEERLRENGDALS) are compositionally biased toward basic and acidic residues. The span at 2863–2873 (GSSRGSSASEG) shows a compositional bias: low complexity.

Belongs to the G-protein coupled receptor 2 family. LN-TM7 subfamily. Heterodimer of 2 chains generated by proteolytic processing; the large extracellular N-terminal fragment and the membrane-bound C-terminal fragment predominantly remain associated and non-covalently linked. The iron and 2-oxoglutarate dependent 3-hydroxylation of aspartate and asparagine is (R) stereospecific within EGF domains. Post-translationally, autoproteolytically processed at the GPS region of the GAIN-B domain; this cleavage modulates receptor activity. Highest expression in brain and testis.

It localises to the cell membrane. Its function is as follows. Receptor that may have an important role in cell/cell signaling during nervous system formation. This chain is Cadherin EGF LAG seven-pass G-type receptor 2, found in Homo sapiens (Human).